Reading from the N-terminus, the 329-residue chain is Deoxyhypusine hydroxylase (329 aa).

4 HEAT-like PBS-type repeats span residues L65 to D91, R99 to D124, F232 to N258, and V265 to D292. Fe cation-binding residues include H67, E68, H100, E101, H234, E235, H267, and E268.

Belongs to the deoxyhypusine hydroxylase family. Fe(2+) serves as cofactor.

The protein localises to the cytoplasm. It localises to the nucleus. The catalysed reaction is [eIF5A protein]-deoxyhypusine + AH2 + O2 = [eIF5A protein]-hypusine + A + H2O. The protein operates within protein modification; eIF5A hypusination. In terms of biological role, catalyzes the hydroxylation of the N(6)-(4-aminobutyl)-L-lysine intermediate to form hypusine, an essential post-translational modification only found in mature eIF-5A factor. This Phaeosphaeria nodorum (strain SN15 / ATCC MYA-4574 / FGSC 10173) (Glume blotch fungus) protein is Deoxyhypusine hydroxylase.